A 216-amino-acid polypeptide reads, in one-letter code: MSSLDLFHYEKPTLLEFDSMVRCQGYASLAGVDEAGRGPLAGPVVAAAVILPAGIGLSEVDDSKKLTSGKRDELFEVIMANALAVGVGLSDAGVIDRINILQATLAAMKEALSLLFIKPDYVLVDGISKIPVTIPQKTIKKGDGTSLSIAAASIVAKVHRDRLMVSYDAEFPQYGFAAHKGYGCVDHLKAIAEYGPCPIHRMTFSGVKEHVKNCEG.

The RNase H type-2 domain occupies 27–216 (ASLAGVDEAG…VKEHVKNCEG (190 aa)). A divalent metal cation-binding residues include Asp-33, Glu-34, and Asp-125.

This sequence belongs to the RNase HII family. Mn(2+) is required as a cofactor. It depends on Mg(2+) as a cofactor.

The protein localises to the cytoplasm. The enzyme catalyses Endonucleolytic cleavage to 5'-phosphomonoester.. Endonuclease that specifically degrades the RNA of RNA-DNA hybrids. The polypeptide is Ribonuclease HII (Geotalea daltonii (strain DSM 22248 / JCM 15807 / FRC-32) (Geobacter daltonii)).